The chain runs to 100 residues: Urease subunit gamma (100 aa).

It belongs to the urease gamma subunit family. In terms of assembly, heterotrimer of UreA (gamma), UreB (beta) and UreC (alpha) subunits. Three heterotrimers associate to form the active enzyme.

It is found in the cytoplasm. It catalyses the reaction urea + 2 H2O + H(+) = hydrogencarbonate + 2 NH4(+). Its pathway is nitrogen metabolism; urea degradation; CO(2) and NH(3) from urea (urease route): step 1/1. In Variovorax paradoxus (strain S110), this protein is Urease subunit gamma.